A 263-amino-acid polypeptide reads, in one-letter code: 4-hydroxy-2-oxo-heptane-1,7-dioate aldolase (263 aa).

Catalysis depends on His45, which acts as the Proton acceptor. Gln147 lines the substrate pocket. An a divalent metal cation-binding site is contributed by Glu149. Ala174 and Asp175 together coordinate substrate. Asp175 is an a divalent metal cation binding site.

This sequence belongs to the HpcH/HpaI aldolase family. As to quaternary structure, homohexamer; trimer of dimers. A divalent metal cation is required as a cofactor.

It catalyses the reaction 4-hydroxy-2-oxoheptanedioate = succinate semialdehyde + pyruvate. It functions in the pathway aromatic compound metabolism; 4-hydroxyphenylacetate degradation; pyruvate and succinate semialdehyde from 4-hydroxyphenylacetate: step 7/7. Functionally, catalyzes the reversible retro-aldol cleavage of 4-hydroxy-2-ketoheptane-1,7-dioate (HKHD) to pyruvate and succinic semialdehyde. This chain is 4-hydroxy-2-oxo-heptane-1,7-dioate aldolase, found in Salmonella dublin (strain CT_02021853).